A 596-amino-acid polypeptide reads, in one-letter code: Aspartate--tRNA(Asp/Asn) ligase (596 aa).

L-aspartate is bound at residue E175. The aspartate stretch occupies residues 199–202 (QQYK). Positions 221 and 454 each coordinate L-aspartate. 221–223 (RDE) contacts ATP. E488 serves as a coordination point for ATP. R495 serves as a coordination point for L-aspartate. An ATP-binding site is contributed by 540–543 (GIDR).

This sequence belongs to the class-II aminoacyl-tRNA synthetase family. Type 1 subfamily. As to quaternary structure, homodimer.

The protein resides in the cytoplasm. It catalyses the reaction tRNA(Asx) + L-aspartate + ATP = L-aspartyl-tRNA(Asx) + AMP + diphosphate. Its function is as follows. Aspartyl-tRNA synthetase with relaxed tRNA specificity since it is able to aspartylate not only its cognate tRNA(Asp) but also tRNA(Asn). Reaction proceeds in two steps: L-aspartate is first activated by ATP to form Asp-AMP and then transferred to the acceptor end of tRNA(Asp/Asn). This is Aspartate--tRNA(Asp/Asn) ligase from Rhizobium johnstonii (strain DSM 114642 / LMG 32736 / 3841) (Rhizobium leguminosarum bv. viciae).